A 105-amino-acid polypeptide reads, in one-letter code: Protein AlbB (105 aa).

In terms of biological role, involved in the biosynthesis of albonoursin (cyclo[(alpha,beta-dehydro-Phe)-(alpha,beta-dehydro-Leu)]), an antibacterial peptide. AlbB is essential for cyclic dipeptide oxidase AlbA (CDO) activity. In Streptomyces noursei (Streptomyces albulus), this protein is Protein AlbB (albB).